Consider the following 951-residue polypeptide: Coiled-coil and C2 domain-containing protein 1A (951 aa).

4 disordered regions span residues Cys80–Thr139, Ala185–Asp266, Val306–Arg346, and Asn437–Gln491. The span at Pro84–Leu104 shows a compositional bias: acidic residues. A phosphothreonine mark is found at Thr92, Thr204, and Thr206. A compositionally biased stretch (low complexity) spans Pro201–Ala210. At Ser208 the chain carries Phosphoserine; by CDK1. Phosphoserine occurs at positions 253 and 324. A compositionally biased stretch (pro residues) spans Leu311–Ala333. A coiled-coil region spans residues Arg346–His392. Ser455 carries the post-translational modification Phosphoserine. Residues Ser475–Thr488 are compositionally biased toward low complexity. Residues Lys484–Val517 adopt a coiled-coil conformation. Residues Arg637–Leu771 form the C2 domain. Residues Thr818–Ser841 form a disordered region.

Belongs to the CC2D1 family. Post-translationally, phosphorylation on Ser-208 by CDK1 promotes spindle pole localization and association with SCC1/RAD21.

It localises to the cytoplasm. The protein resides in the nucleus. The protein localises to the cytoskeleton. It is found in the microtubule organizing center. Its subcellular location is the centrosome. Transcription factor that binds specifically to the DRE (dual repressor element) and represses HTR1A gene transcription in neuronal cells. The combination of calcium and ATP specifically inactivates the binding with FRE. May play a role in the altered regulation of HTR1A associated with anxiety and major depression. Mediates HDAC-independent repression of HTR1A promoter in neuronal cell. Performs essential function in controlling functional maturation of synapses. Plays distinct roles depending on its localization. When cytoplasmic, acts as a scaffold protein in the PI3K/PDK1/AKT pathway. Repressor of HTR1A when nuclear. In the centrosome, regulates spindle pole localization of the cohesin subunit SCC1/RAD21, thereby mediating centriole cohesion during mitosis. This chain is Coiled-coil and C2 domain-containing protein 1A (CC2D1A), found in Homo sapiens (Human).